Consider the following 1477-residue polypeptide: Putative insulin-like peptide receptor (1477 aa).

Residues 1–24 (MMRNVQSFYFLFLLIVLNFHVVLS) form the signal peptide. Over 25-980 (AVCIGQRATT…LSVTKNNNQL (956 aa)) the chain is Extracellular. Asn55, Asn255, Asn300, Asn325, Asn457, Asn491, Asn549, Asn644, Asn732, Asn791, Asn874, Asn895, and Asn957 each carry an N-linked (GlcNAc...) asparagine glycan. Fibronectin type-III domains are found at residues 652–750 (EPLG…IKAD) and 780–869 (NKSP…IVQA). Positions 880 to 971 (LDSKMVRVQV…EEIHFKVAEL (92 aa)) constitute a Fibronectin type-III 3 domain. The chain crosses the membrane as a helical span at residues 981 to 1001 (IIGIISAVSAVIVALLVFILL). Residues 1002–1477 (YMFLHRKLEK…EIFYGKPIPV (476 aa)) lie on the Cytoplasmic side of the membrane. Residues 1044-1315 (IELIRELGQG…LENEVDDDFV (272 aa)) form the Protein kinase domain. Residues 1050 to 1058 (LGQGSFGMV) and Lys1077 contribute to the ATP site. Asp1175 functions as the Proton acceptor in the catalytic mechanism. Tyr1201 is modified (phosphotyrosine; by autocatalysis). Disordered stretches follow at residues 1350-1376 (YTKGDGNMQNMLSRSQNRKSAIEKSKE) and 1391-1421 (KYDANDTPEEIPKKKKRPRSKRNSAVDSNAC). A compositionally biased stretch (polar residues) spans 1356–1368 (NMQNMLSRSQNRK). Over residues 1403–1412 (KKKKRPRSKR) the composition is skewed to basic residues.

It belongs to the protein kinase superfamily. Tyr protein kinase family. Insulin receptor subfamily. The cofactor is Mn(2+). In terms of tissue distribution, expressed in dividing epithelial cells.

It localises to the membrane. The enzyme catalyses L-tyrosyl-[protein] + ATP = O-phospho-L-tyrosyl-[protein] + ADP + H(+). Its function is as follows. This receptor probably binds an insulin related protein and has a tyrosine-protein kinase activity. The polypeptide is Putative insulin-like peptide receptor (HTK7) (Hydra vulgaris (Hydra)).